We begin with the raw amino-acid sequence, 73 residues long: Arabinogalactan protein 16 (73 aa).

The signal sequence occupies residues 1–26 (MASRNSVTGFALFSFVFAVILSLAGA). A Pyrrolidone carboxylic acid modification is found at Gln27. Residues Pro31, Pro33, and Pro35 each carry the 4-hydroxyproline modification. O-linked (Ara...) hydroxyproline glycans are attached at residues Pro31, Pro33, and Pro35. Ser37 is lipidated: GPI-anchor amidated serine. A propeptide spans 38-73 (DGTSIDQGIAYLLMVVALVLTYLIHPLDASSSYSFF) (removed in mature form).

The protein belongs to the AG-peptide AGP family. In terms of processing, contains 4-hydroxyproline; hydroxylated on Pro-31, Pro-33 and Pro-35. O-glycosylated on hydroxyprolines; noncontiguous hydroxylproline residues are glycosylated with arabinogalactan. As to expression, predominantly expressed in flowers.

It is found in the cell membrane. Functionally, proteoglycan that seems to be implicated in diverse developmental roles such as differentiation, cell-cell recognition, embryogenesis and programmed cell death. The protein is Arabinogalactan protein 16 of Arabidopsis thaliana (Mouse-ear cress).